The following is a 238-amino-acid chain: Large ribosomal subunit protein bL17m (238 aa).

The protein belongs to the bacterial ribosomal protein bL17 family. In terms of assembly, component of the mitochondrial large ribosomal subunit (mt-LSU). Mature yeast 74S mitochondrial ribosomes consist of a small (37S) and a large (54S) subunit. The 37S small subunit contains a 15S ribosomal RNA (15S mt-rRNA) and 34 different proteins. The 54S large subunit contains a 21S rRNA (21S mt-rRNA) and 46 different proteins.

It localises to the mitochondrion. Functionally, component of the mitochondrial ribosome (mitoribosome), a dedicated translation machinery responsible for the synthesis of mitochondrial genome-encoded proteins, including at least some of the essential transmembrane subunits of the mitochondrial respiratory chain. The mitoribosomes are attached to the mitochondrial inner membrane and translation products are cotranslationally integrated into the membrane. This Saccharomyces cerevisiae (strain ATCC 204508 / S288c) (Baker's yeast) protein is Large ribosomal subunit protein bL17m (MRPL8).